Consider the following 425-residue polypeptide: UDP-N-acetylglucosamine 1-carboxyvinyltransferase (425 aa).

22–23 (KN) serves as a coordination point for phosphoenolpyruvate. Position 91 (arginine 91) interacts with UDP-N-acetyl-alpha-D-glucosamine. The active-site Proton donor is cysteine 115. Cysteine 115 is subject to 2-(S-cysteinyl)pyruvic acid O-phosphothioketal. UDP-N-acetyl-alpha-D-glucosamine contacts are provided by residues 120–124 (RPVDL), aspartate 309, and isoleucine 331.

The protein belongs to the EPSP synthase family. MurA subfamily.

The protein resides in the cytoplasm. The catalysed reaction is phosphoenolpyruvate + UDP-N-acetyl-alpha-D-glucosamine = UDP-N-acetyl-3-O-(1-carboxyvinyl)-alpha-D-glucosamine + phosphate. The protein operates within cell wall biogenesis; peptidoglycan biosynthesis. In terms of biological role, cell wall formation. Adds enolpyruvyl to UDP-N-acetylglucosamine. The sequence is that of UDP-N-acetylglucosamine 1-carboxyvinyltransferase from Akkermansia muciniphila (strain ATCC BAA-835 / DSM 22959 / JCM 33894 / BCRC 81048 / CCUG 64013 / CIP 107961 / Muc).